The primary structure comprises 247 residues: MRQSEWLDTVLGLLPGCPKGLPGFWVENEAQASGQALELVLGWHDDCLGLWRPGGKQTPLTVSFCDGKQGYRLTPERVRHERLIKALGKPKDDRIRVLDATAGLGRDAALMAQAGFQVMLAERSPILHAMLADGLQRAPASLVANMQLLACADSKIAEPSALHAVYLDPMFPAREKSAAVKKDLQWLQRLCPYPDEVEEQQLLDWARALGASRVVVKRPVKAGFLAGVTPSFSQKGKAVRFDIYTCP.

S-adenosyl-L-methionine-binding positions include 106–107 (RD), 122–123 (ER), and Asp-168.

It belongs to the methyltransferase superfamily. RsmJ family.

It is found in the cytoplasm. The catalysed reaction is guanosine(1516) in 16S rRNA + S-adenosyl-L-methionine = N(2)-methylguanosine(1516) in 16S rRNA + S-adenosyl-L-homocysteine + H(+). Functionally, specifically methylates the guanosine in position 1516 of 16S rRNA. The chain is Ribosomal RNA small subunit methyltransferase J from Alcanivorax borkumensis (strain ATCC 700651 / DSM 11573 / NCIMB 13689 / SK2).